The following is a 370-amino-acid chain: Dual-specificity RNA methyltransferase RlmN (370 aa).

Glu93 serves as the catalytic Proton acceptor. A Radical SAM core domain is found at 99–337; it reads EEGRGTLCVS…VTTVRKTRGD (239 aa). Residues Cys106 and Cys343 are joined by a disulfide bond. Residues Cys113, Cys117, and Cys120 each contribute to the [4Fe-4S] cluster site. S-adenosyl-L-methionine-binding positions include 167–168, Ser199, 221–223, and Asn300; these read GE and SLH. Cys343 acts as the S-methylcysteine intermediate in catalysis.

It belongs to the radical SAM superfamily. RlmN family. [4Fe-4S] cluster is required as a cofactor.

The protein localises to the cytoplasm. The catalysed reaction is adenosine(2503) in 23S rRNA + 2 reduced [2Fe-2S]-[ferredoxin] + 2 S-adenosyl-L-methionine = 2-methyladenosine(2503) in 23S rRNA + 5'-deoxyadenosine + L-methionine + 2 oxidized [2Fe-2S]-[ferredoxin] + S-adenosyl-L-homocysteine. The enzyme catalyses adenosine(37) in tRNA + 2 reduced [2Fe-2S]-[ferredoxin] + 2 S-adenosyl-L-methionine = 2-methyladenosine(37) in tRNA + 5'-deoxyadenosine + L-methionine + 2 oxidized [2Fe-2S]-[ferredoxin] + S-adenosyl-L-homocysteine. Specifically methylates position 2 of adenine 2503 in 23S rRNA and position 2 of adenine 37 in tRNAs. m2A2503 modification seems to play a crucial role in the proofreading step occurring at the peptidyl transferase center and thus would serve to optimize ribosomal fidelity. The sequence is that of Dual-specificity RNA methyltransferase RlmN from Francisella philomiragia subsp. philomiragia (strain ATCC 25017 / CCUG 19701 / FSC 153 / O#319-036).